The chain runs to 363 residues: UV excision repair protein RAD23 homolog A (363 aa).

The region spanning 1-81 (MAVTITLKTL…VVVMVTKTKA (81 aa)) is the Ubiquitin-like domain. The interval 81–160 (AGQGTSAPPE…EDAASTLVTG (80 aa)) is disordered. Positions 85–103 (TSAPPEASPTAAPESSTSF) are enriched in low complexity. A Glycyl lysine isopeptide (Lys-Gly) (interchain with G-Cter in ubiquitin) cross-link involves residue Lys122. Phosphoserine occurs at positions 123, 128, 133, 136, and 138. Over residues 126-147 (EESAPTTSPESVSGSVPSSGSS) the composition is skewed to low complexity. The UBA 1 domain occupies 161–201 (SEYETMLTEIMSMGYERERVVAALRASYNNPHRAVEYLLTG). The interval 203–227 (PGSPEPEHGSVQESQVSEQPATEAA) is disordered. Residue Ser205 is modified to Phosphoserine. Polar residues predominate over residues 213–222 (VQESQVSEQP). Residues Ser295 and Ser357 each carry the phosphoserine modification. The 41-residue stretch at 318–358 (PQEKEAIERLKALGFPESLVIQAYFACEKNENLAANFLLSQ) folds into the UBA 2 domain. The interval 319–363 (QEKEAIERLKALGFPESLVIQAYFACEKNENLAANFLLSQNFDDE) is HIV-1 vpr binding.

The protein belongs to the RAD23 family. In terms of assembly, interacts with XPC; the interaction is suggesting the existence of a functional equivalent variant XPC complex. Interacts with PSMD4 and PSMC5. Interacts with ATXN3. Interacts with UBQLN2. (Microbial infection) Interacts with HIV-1 Vpr.

Its subcellular location is the nucleus. In terms of biological role, multiubiquitin chain receptor involved in modulation of proteasomal degradation. Binds to 'Lys-48'-linked polyubiquitin chains in a length-dependent manner and with a lower affinity to 'Lys-63'-linked polyubiquitin chains. Proposed to be capable to bind simultaneously to the 26S proteasome and to polyubiquitinated substrates and to deliver ubiquitinated proteins to the proteasome. Its function is as follows. Involved in nucleotide excision repair and is thought to be functional equivalent for RAD23B in global genome nucleotide excision repair (GG-NER) by association with XPC. In vitro, the XPC:RAD23A dimer has NER activity. Can stabilize XPC. Functionally, (Microbial infection) Involved in Vpr-dependent replication of HIV-1 in non-proliferating cells and primary macrophages. Required for the association of HIV-1 Vpr with the host proteasome. The polypeptide is UV excision repair protein RAD23 homolog A (RAD23A) (Homo sapiens (Human)).